We begin with the raw amino-acid sequence, 357 residues long: Glucose-6-phosphatase catalytic subunit 1 (357 aa).

The Lumenal portion of the chain corresponds to 1–28 (MEKGMNVLHDFGIQSTHYLQVNYQNSQD). The helical transmembrane segment at 29 to 49 (WFILVSVIADLRNAFYVLFPI) threads the bilayer. The Cytoplasmic portion of the chain corresponds to 50–60 (WFHLREAVGIK). The helical transmembrane segment at 61-81 (LLWVAVIGDWLNLVFKWILFG) threads the bilayer. Topologically, residues 82 to 117 (QRPYWWVLDTDYYSNTSAPLIKQFPVTCETGPGSPS) are lumenal. Residue Arg83 coordinates substrate. N-linked (GlcNAc...) asparagine glycosylation is present at Asn96. The helical transmembrane segment at 118–138 (GHAMGTAGVYYVMVTSTLSIF) threads the bilayer. The active-site Proton donor is His119. At 139-147 (RGKKKPTYR) the chain is on the cytoplasmic side. Residues 148 to 168 (FRCLNVMLWLGFWVVQLNVCL) traverse the membrane as a helical segment. The Lumenal portion of the chain corresponds to 169-170 (SR). Arg170 is a substrate binding site. A helical membrane pass occupies residues 171 to 191 (IYLAAHFPHQVVAGVLSGIAV). The Nucleophile role is filled by His176. Residues 192 to 209 (AETFRHIQSIYNASLKKY) are Cytoplasmic-facing. Residues 210-230 (FLITCFLFSFAIGFYLLLKWL) traverse the membrane as a helical segment. Over 231 to 254 (GVDLLWTLEKAKRRCERPEWVHID) the chain is Lumenal. A helical membrane pass occupies residues 255 to 275 (TTPFASLLKNLGTLFGLGLAL). Residues 276 to 291 (NSSMYRESCKGKLSKW) are Cytoplasmic-facing. Residues 292 to 312 (FPFRLSCIVASLVLLHLFDSL) form a helical membrane-spanning segment. Residues 313 to 320 (KPPSQIEL) are Lumenal-facing. The chain crosses the membrane as a helical span at residues 321-341 (IFYVLSFCKSAAVPLASVSLI). Residues 342-357 (PYCLAWVLGQPNKKTV) lie on the Cytoplasmic side of the membrane. The Prevents secretion from ER signature appears at 354-357 (KKTV).

It belongs to the glucose-6-phosphatase family.

The protein localises to the endoplasmic reticulum membrane. The catalysed reaction is D-glucose 6-phosphate + H2O = D-glucose + phosphate. Its pathway is carbohydrate biosynthesis; gluconeogenesis. Hydrolyzes glucose-6-phosphate to glucose in the endoplasmic reticulum. Forms with the glucose-6-phosphate transporter (SLC37A4/G6PT) the complex responsible for glucose production in the terminal step of glycogenolysis and gluconeogenesis. Hence, it is the key enzyme in homeostatic regulation of blood glucose levels. This chain is Glucose-6-phosphatase catalytic subunit 1 (G6PC1), found in Bos taurus (Bovine).